A 467-amino-acid polypeptide reads, in one-letter code: Receptor-like cytosolic serine/threonine-protein kinase RBK1 (467 aa).

The span at 1-24 (MAVEDNKNSESKNHQEVELHRNDL) shows a compositional bias: basic and acidic residues. Residues 1 to 73 (MAVEDNKNSE…PFSNTTKTVS (73 aa)) are disordered. Residues 40–71 (SDSDNSSSSCSSCSSDDKSSSTSSPFSNTTKT) are compositionally biased toward low complexity. T142 bears the Phosphothreonine mark. In terms of domain architecture, Protein kinase spans 153–430 (FNPENMIGKG…LRGEDGPAEL (278 aa)). ATP contacts are provided by residues 159–167 (IGKGGHAEV) and K181. D278 (proton acceptor) is an active-site residue. Residue S282 is modified to Phosphoserine. Phosphothreonine is present on T318. A Phosphotyrosine modification is found at Y326.

It belongs to the protein kinase superfamily. Ser/Thr protein kinase family. Interacts with ARAC5 and ARAC10. In terms of tissue distribution, mostly expressed in vasculature, hydathode endothem, leaf mesophyll cells and trichomes.

It localises to the cytoplasm. The protein resides in the endomembrane system. It is found in the nucleus. The catalysed reaction is L-seryl-[protein] + ATP = O-phospho-L-seryl-[protein] + ADP + H(+). The enzyme catalyses L-threonyl-[protein] + ATP = O-phospho-L-threonyl-[protein] + ADP + H(+). The chain is Receptor-like cytosolic serine/threonine-protein kinase RBK1 (RBK1) from Arabidopsis thaliana (Mouse-ear cress).